Reading from the N-terminus, the 531-residue chain is Isocitrate lyase (531 aa).

101-103 (SGW) provides a ligand contact to substrate. Position 184 (aspartate 184) interacts with Mg(2+). The active-site Proton acceptor is the cysteine 222. Residues 223-224 (GH), 380-384 (NNSPS), and threonine 451 contribute to the substrate site.

It belongs to the isocitrate lyase/PEP mutase superfamily. Isocitrate lyase family. As to quaternary structure, homotetramer. Mg(2+) is required as a cofactor.

The enzyme catalyses D-threo-isocitrate = glyoxylate + succinate. The protein operates within carbohydrate metabolism; glyoxylate cycle; (S)-malate from isocitrate: step 1/2. Involved in the metabolic adaptation in response to environmental changes. Catalyzes the reversible formation of succinate and glyoxylate from isocitrate, a key step of the glyoxylate cycle, which operates as an anaplerotic route for replenishing the tricarboxylic acid cycle during growth on fatty acid substrates. This Pseudomonas aeruginosa (strain ATCC 15692 / DSM 22644 / CIP 104116 / JCM 14847 / LMG 12228 / 1C / PRS 101 / PAO1) protein is Isocitrate lyase.